The chain runs to 156 residues: ATP synthase subunit b (156 aa).

A helical transmembrane segment spans residues 4 to 26 (GATFWGPMISFALFVWFTMKYVW).

This sequence belongs to the ATPase B chain family. In terms of assembly, F-type ATPases have 2 components, F(1) - the catalytic core - and F(0) - the membrane proton channel. F(1) has five subunits: alpha(3), beta(3), gamma(1), delta(1), epsilon(1). F(0) has three main subunits: a(1), b(2) and c(10-14). The alpha and beta chains form an alternating ring which encloses part of the gamma chain. F(1) is attached to F(0) by a central stalk formed by the gamma and epsilon chains, while a peripheral stalk is formed by the delta and b chains.

The protein resides in the cell inner membrane. Its function is as follows. F(1)F(0) ATP synthase produces ATP from ADP in the presence of a proton or sodium gradient. F-type ATPases consist of two structural domains, F(1) containing the extramembraneous catalytic core and F(0) containing the membrane proton channel, linked together by a central stalk and a peripheral stalk. During catalysis, ATP synthesis in the catalytic domain of F(1) is coupled via a rotary mechanism of the central stalk subunits to proton translocation. Component of the F(0) channel, it forms part of the peripheral stalk, linking F(1) to F(0). The sequence is that of ATP synthase subunit b from Alkalilimnicola ehrlichii (strain ATCC BAA-1101 / DSM 17681 / MLHE-1).